The chain runs to 432 residues: Adenylosuccinate synthetase (432 aa).

GTP contacts are provided by residues 12–18 (GDEGKGK) and 40–42 (GHT). The active-site Proton acceptor is Asp-13. Mg(2+) contacts are provided by Asp-13 and Gly-40. IMP-binding positions include 13–16 (DEGK), 38–41 (NAGH), Thr-132, Arg-146, Gln-226, Thr-241, and Arg-305. His-41 functions as the Proton donor in the catalytic mechanism. Position 301–307 (301–307 (VVTGRKR)) interacts with substrate. GTP-binding positions include Arg-307, 333-335 (KLD), and 415-417 (STS).

The protein belongs to the adenylosuccinate synthetase family. In terms of assembly, homodimer. Mg(2+) is required as a cofactor.

It is found in the cytoplasm. It carries out the reaction IMP + L-aspartate + GTP = N(6)-(1,2-dicarboxyethyl)-AMP + GDP + phosphate + 2 H(+). It functions in the pathway purine metabolism; AMP biosynthesis via de novo pathway; AMP from IMP: step 1/2. In terms of biological role, plays an important role in the de novo pathway of purine nucleotide biosynthesis. Catalyzes the first committed step in the biosynthesis of AMP from IMP. The chain is Adenylosuccinate synthetase from Rhizobium leguminosarum bv. trifolii (strain WSM2304).